The sequence spans 417 residues: Gamma-glutamyl phosphate reductase (417 aa).

This sequence belongs to the gamma-glutamyl phosphate reductase family.

It localises to the cytoplasm. It catalyses the reaction L-glutamate 5-semialdehyde + phosphate + NADP(+) = L-glutamyl 5-phosphate + NADPH + H(+). It participates in amino-acid biosynthesis; L-proline biosynthesis; L-glutamate 5-semialdehyde from L-glutamate: step 2/2. Catalyzes the NADPH-dependent reduction of L-glutamate 5-phosphate into L-glutamate 5-semialdehyde and phosphate. The product spontaneously undergoes cyclization to form 1-pyrroline-5-carboxylate. This chain is Gamma-glutamyl phosphate reductase, found in Escherichia coli O17:K52:H18 (strain UMN026 / ExPEC).